We begin with the raw amino-acid sequence, 498 residues long: MKKCWFHSMLSNVELEYRCRLSKSMDNLGPLENTSVSEDPILNDTEKNTYNWSHSDSSNVDHLVGVRDIRNLNVDDTFLVLGRDNKKDGYSIYFDIENQVFGIDNNHSFLSKLEKEFSSYWNSSYLNKGSRSDDSHYDYSMYDNKYSWNNYINSCIDSYLRSQIGIASSILSGSESYSESYISTYILGESRNSSETGNSRLRTSTNGSDFALRENSNDLGVTQKYKHLWVQCEICYGLNYKKFFKSKMNICEQCGYHLKMSSSDRIELSIDPGTWDPMDEEMFSLDPIDFHSEEEPYKDRIDSYQKKTGLTEAIQTGIGQLNGIPVAIGVMDFQFMGGSMGSVVGEKITRLIEYATNQFLPLILVCASGGARMQEGSLSLMQMAKISSALYDYQSNKKLVYVSILTSPTTGGVTASFGMLGDIIIAEPNAYIAFAGKRVIEQTLNKTVPEGSQAAEFLFHKGLFDPIVPRNLLKGVLSELFQLHAFFPLNHNLSRTLT.

Positions 228-498 constitute a CoA carboxyltransferase N-terminal domain; that stretch reads LWVQCEICYG…LNHNLSRTLT (271 aa). Zn(2+)-binding residues include Cys-232, Cys-235, Cys-251, and Cys-254. A C4-type zinc finger spans residues 232-254; sequence CEICYGLNYKKFFKSKMNICEQC.

The protein belongs to the AccD/PCCB family. In terms of assembly, acetyl-CoA carboxylase is a heterohexamer composed of biotin carboxyl carrier protein, biotin carboxylase and 2 subunits each of ACCase subunit alpha and ACCase plastid-coded subunit beta (accD). It depends on Zn(2+) as a cofactor.

It localises to the plastid. The protein resides in the chloroplast stroma. It catalyses the reaction N(6)-carboxybiotinyl-L-lysyl-[protein] + acetyl-CoA = N(6)-biotinyl-L-lysyl-[protein] + malonyl-CoA. Its pathway is lipid metabolism; malonyl-CoA biosynthesis; malonyl-CoA from acetyl-CoA: step 1/1. Functionally, component of the acetyl coenzyme A carboxylase (ACC) complex. Biotin carboxylase (BC) catalyzes the carboxylation of biotin on its carrier protein (BCCP) and then the CO(2) group is transferred by the transcarboxylase to acetyl-CoA to form malonyl-CoA. This Populus trichocarpa (Western balsam poplar) protein is Acetyl-coenzyme A carboxylase carboxyl transferase subunit beta, chloroplastic.